Consider the following 145-residue polypeptide: Small ribosomal subunit protein uS12A (145 aa).

P64 carries the hydroxyproline modification.

Belongs to the universal ribosomal protein uS12 family.

This chain is Small ribosomal subunit protein uS12A (RPS23A), found in Naumovozyma castellii (Yeast).